A 797-amino-acid chain; its full sequence is Ent-atiserene synthase KSL1, chloroplastic (797 aa).

The N-terminal 48 residues, 1-48, are a transit peptide targeting the chloroplast; it reads LVKDDMSLILSSFSLFRSSRSSPASASLAGSGHPRTTPPKIASLQSPM. Positions 21–32 are enriched in low complexity; the sequence is SSPASASLAGSG. The segment at 21 to 47 is disordered; that stretch reads SSPASASLAGSGHPRTTPPKIASLQSP. Mg(2+) is bound by residues aspartate 547, aspartate 551, asparagine 691, and glutamate 699. The DDXXD motif signature appears at 547–551; it reads DDLFD.

The protein belongs to the terpene synthase family. Mg(2+) is required as a cofactor.

It localises to the plastid. The protein resides in the chloroplast. The enzyme catalyses ent-copalyl diphosphate = ent-atiserene + diphosphate. The protein operates within secondary metabolite biosynthesis; terpenoid biosynthesis. In terms of biological role, involved in the biosynthesis of ent-kaurene diterpenoids natural products such as oridonin, miltiradiene, eriocalyxin B and nezukol, known to exhibit antitumor, anti-inflammatory and antibacterial activities. Catalyzes the conversion of ent-copalyl diphosphate (ent-CPP) to ent-atiserene. The protein is Ent-atiserene synthase KSL1, chloroplastic of Isodon japonicus (Scutellaria japonica).